Reading from the N-terminus, the 212-residue chain is FMN-dependent NADH:quinone oxidoreductase (212 aa).

Residues serine 9, serine 15 to serine 17, and threonine 138 to glycine 141 each bind FMN.

The protein belongs to the azoreductase type 1 family. In terms of assembly, homodimer. FMN serves as cofactor.

The enzyme catalyses 2 a quinone + NADH + H(+) = 2 a 1,4-benzosemiquinone + NAD(+). It catalyses the reaction N,N-dimethyl-1,4-phenylenediamine + anthranilate + 2 NAD(+) = 2-(4-dimethylaminophenyl)diazenylbenzoate + 2 NADH + 2 H(+). Quinone reductase that provides resistance to thiol-specific stress caused by electrophilic quinones. Functionally, also exhibits azoreductase activity. Catalyzes the reductive cleavage of the azo bond in aromatic azo compounds to the corresponding amines. The polypeptide is FMN-dependent NADH:quinone oxidoreductase (Delftia acidovorans (strain DSM 14801 / SPH-1)).